Reading from the N-terminus, the 215-residue chain is Riboflavin synthase (215 aa).

Lumazine-binding repeat units follow at residues 1–96 and 97–193; these read MFTG…FGGH and FVSG…YRFL. 2,4-dihydroxypteridine contacts are provided by residues 4–6, 47–49, 61–66, 100–102, lysine 135, 144–146, and 158–163; these read GIV, CLT, DVMPET, GHV, SST, and SVIPHT.

As to quaternary structure, homotrimer.

It catalyses the reaction 2 6,7-dimethyl-8-(1-D-ribityl)lumazine + H(+) = 5-amino-6-(D-ribitylamino)uracil + riboflavin. The protein operates within cofactor biosynthesis; riboflavin biosynthesis; riboflavin from 2-hydroxy-3-oxobutyl phosphate and 5-amino-6-(D-ribitylamino)uracil: step 2/2. In terms of biological role, catalyzes the dismutation of two molecules of 6,7-dimethyl-8-ribityllumazine, resulting in the formation of riboflavin and 5-amino-6-(D-ribitylamino)uracil. In Bacillus amyloliquefaciens (Bacillus velezensis), this protein is Riboflavin synthase (ribE).